The chain runs to 86 residues: UPF0457 protein SAUSA300_2132 (86 aa).

It belongs to the UPF0457 family.

The sequence is that of UPF0457 protein SAUSA300_2132 from Staphylococcus aureus (strain USA300).